Consider the following 126-residue polypeptide: Holo-[acyl-carrier-protein] synthase (126 aa).

Positions 9 and 58 each coordinate Mg(2+).

Belongs to the P-Pant transferase superfamily. AcpS family. Mg(2+) serves as cofactor.

It localises to the cytoplasm. It carries out the reaction apo-[ACP] + CoA = holo-[ACP] + adenosine 3',5'-bisphosphate + H(+). Its function is as follows. Transfers the 4'-phosphopantetheine moiety from coenzyme A to a Ser of acyl-carrier-protein. This is Holo-[acyl-carrier-protein] synthase from Yersinia pestis bv. Antiqua (strain Angola).